A 106-amino-acid polypeptide reads, in one-letter code: UPF0060 membrane protein RHE_CH01408 (106 aa).

4 helical membrane-spanning segments follow: residues 4-24, 30-50, 59-79, and 86-106; these read IIYA…WAWL, AWWL…LTLV, FAAY…LIEG, and DIGG…APRA.

The protein belongs to the UPF0060 family.

The protein resides in the cell inner membrane. The protein is UPF0060 membrane protein RHE_CH01408 of Rhizobium etli (strain ATCC 51251 / DSM 11541 / JCM 21823 / NBRC 15573 / CFN 42).